Consider the following 94-residue polypeptide: MRIKPLGDRVVIKRLEAEEKTKSGIVLPGSAKEKPQEAEIVAVGPGGLVDGKEVNMEVKVGDRVLFSQYAGNEVKIDGEEYIILRQNDILAIVE.

This sequence belongs to the GroES chaperonin family. In terms of assembly, heptamer of 7 subunits arranged in a ring. Interacts with the chaperonin GroEL.

It localises to the cytoplasm. Its function is as follows. Together with the chaperonin GroEL, plays an essential role in assisting protein folding. The GroEL-GroES system forms a nano-cage that allows encapsulation of the non-native substrate proteins and provides a physical environment optimized to promote and accelerate protein folding. GroES binds to the apical surface of the GroEL ring, thereby capping the opening of the GroEL channel. This is Co-chaperonin GroES from Clostridium botulinum.